A 342-amino-acid chain; its full sequence is RNA 3'-terminal phosphate cyclase (342 aa).

Residues Gln-100 and 283–287 each bind ATP; that span reads FLGDQ. His-307 acts as the Tele-AMP-histidine intermediate in catalysis.

This sequence belongs to the RNA 3'-terminal cyclase family. Type 1 subfamily.

It is found in the cytoplasm. The enzyme catalyses a 3'-end 3'-phospho-ribonucleotide-RNA + ATP = a 3'-end 2',3'-cyclophospho-ribonucleotide-RNA + AMP + diphosphate. Catalyzes the conversion of 3'-phosphate to a 2',3'-cyclic phosphodiester at the end of RNA. The mechanism of action of the enzyme occurs in 3 steps: (A) adenylation of the enzyme by ATP; (B) transfer of adenylate to an RNA-N3'P to produce RNA-N3'PP5'A; (C) and attack of the adjacent 2'-hydroxyl on the 3'-phosphorus in the diester linkage to produce the cyclic end product. The biological role of this enzyme is unknown but it is likely to function in some aspects of cellular RNA processing. The protein is RNA 3'-terminal phosphate cyclase (rtcA) of Pyrococcus abyssi (strain GE5 / Orsay).